Here is a 226-residue protein sequence, read N- to C-terminus: Protein YAE1 homolog (226 aa).

Positions 45-85 are deca-GX3 motif; required for interaction with LTO1; the sequence is GYRDGIDAGKAVTLQQGFNQGYKKGAEVILNYGRLRGTLSA.

In terms of assembly, forms a complex with LTO1.

It is found in the cytoplasm. It localises to the nucleus. In terms of biological role, the complex LTO1:YAE1 functions as a target specific adapter that probably recruits apo-ABCE1 to the cytosolic iron-sulfur protein assembly (CIA) complex machinery. May be required for biogenesis of the large ribosomal subunit and initiation of translation. The protein is Protein YAE1 homolog of Homo sapiens (Human).